We begin with the raw amino-acid sequence, 483 residues long: Probable zinc metalloprotease PTT_08196 (483 aa).

A signal peptide spans 1 to 18; it reads MLFRSVILSNALLLPACA. 2 N-linked (GlcNAc...) asparagine glycosylation sites follow: Asn96 and Asn121. The Zn(2+) site is built by His167, Asp187, and Glu220. Asn235 carries an N-linked (GlcNAc...) asparagine glycan. Residue Asp247 participates in Zn(2+) binding. N-linked (GlcNAc...) asparagine glycosylation is found at Asn310, Asn362, Asn401, Asn411, and Asn421. The Fibronectin type-III domain maps to 396–483; it reads PAMPRNVTID…KSPAVYPFPA (88 aa).

The protein belongs to the peptidase M28 family. M28B subfamily. It depends on Zn(2+) as a cofactor.

The protein localises to the secreted. This Pyrenophora teres f. teres (strain 0-1) (Barley net blotch fungus) protein is Probable zinc metalloprotease PTT_08196.